The following is a 480-amino-acid chain: Protein nucleotidyltransferase YdiU (480 aa).

Residues glycine 86, glycine 88, arginine 89, lysine 109, aspartate 121, glycine 122, arginine 172, and arginine 179 each coordinate ATP. Aspartate 248 acts as the Proton acceptor in catalysis. 2 residues coordinate Mg(2+): asparagine 249 and aspartate 258. Aspartate 258 provides a ligand contact to ATP.

The protein belongs to the SELO family. Requires Mg(2+) as cofactor. The cofactor is Mn(2+).

It carries out the reaction L-seryl-[protein] + ATP = 3-O-(5'-adenylyl)-L-seryl-[protein] + diphosphate. It catalyses the reaction L-threonyl-[protein] + ATP = 3-O-(5'-adenylyl)-L-threonyl-[protein] + diphosphate. The catalysed reaction is L-tyrosyl-[protein] + ATP = O-(5'-adenylyl)-L-tyrosyl-[protein] + diphosphate. The enzyme catalyses L-histidyl-[protein] + UTP = N(tele)-(5'-uridylyl)-L-histidyl-[protein] + diphosphate. It carries out the reaction L-seryl-[protein] + UTP = O-(5'-uridylyl)-L-seryl-[protein] + diphosphate. It catalyses the reaction L-tyrosyl-[protein] + UTP = O-(5'-uridylyl)-L-tyrosyl-[protein] + diphosphate. Its function is as follows. Nucleotidyltransferase involved in the post-translational modification of proteins. It can catalyze the addition of adenosine monophosphate (AMP) or uridine monophosphate (UMP) to a protein, resulting in modifications known as AMPylation and UMPylation. This is Protein nucleotidyltransferase YdiU from Salmonella choleraesuis (strain SC-B67).